The primary structure comprises 367 residues: tRNA/tmRNA (uracil-C(5))-methyltransferase (367 aa).

The S-adenosyl-L-methionine site is built by Gln190, Tyr218, Asn223, Glu239, and Asp299. Cys324 serves as the catalytic Nucleophile. Catalysis depends on Glu358, which acts as the Proton acceptor.

Belongs to the class I-like SAM-binding methyltransferase superfamily. RNA M5U methyltransferase family. TrmA subfamily.

The catalysed reaction is uridine(54) in tRNA + S-adenosyl-L-methionine = 5-methyluridine(54) in tRNA + S-adenosyl-L-homocysteine + H(+). The enzyme catalyses uridine(341) in tmRNA + S-adenosyl-L-methionine = 5-methyluridine(341) in tmRNA + S-adenosyl-L-homocysteine + H(+). Dual-specificity methyltransferase that catalyzes the formation of 5-methyluridine at position 54 (m5U54) in all tRNAs, and that of position 341 (m5U341) in tmRNA (transfer-mRNA). The polypeptide is tRNA/tmRNA (uracil-C(5))-methyltransferase (Dickeya chrysanthemi (strain Ech1591) (Dickeya zeae (strain Ech1591))).